A 398-amino-acid chain; its full sequence is T-box transcription factor TBX1 (398 aa).

Positions 23-72 are disordered; sequence AAGGFPGAASPGADPYGPREPPPPPPRYDPCAAAAPGAPGPPPPPHAYPF. Residues 29 to 38 show a composition bias toward low complexity; that stretch reads GAASPGADPY. 2 stretches are compositionally biased toward pro residues: residues 40-50 and 60-69; these read PREPPPPPPRY and APGPPPPPHA. A DNA-binding region (T-box) is located at residues 119 to 297; it reads LWDEFNQLGT…SNPFAKGFRD (179 aa).

In terms of assembly, binds DNA as a dimer. Interacts with DSCR6. Interacts with NKX2-5.

It is found in the nucleus. In terms of biological role, transcription factor that plays a key role in cardiovascular development by promoting pharyngeal arch segmentation during embryonic development. Also involved in craniofacial muscle development. Together with NKX2-5, acts as a regulator of asymmetric cardiac morphogenesis by promoting expression of PITX2. Acts upstream of TBX1 for the formation of the thymus and parathyroid glands from the third pharyngeal pouch. Required for hair follicle stem cell self-renewal. Binds to the palindromic T site 5'-TTCACACCTAGGTGTGAA-3' DNA sequence. The polypeptide is T-box transcription factor TBX1 (Homo sapiens (Human)).